A 474-amino-acid polypeptide reads, in one-letter code: Aspartyl/glutamyl-tRNA(Asn/Gln) amidotransferase subunit B (474 aa).

It belongs to the GatB/GatE family. GatB subfamily. In terms of assembly, heterotrimer of A, B and C subunits.

The enzyme catalyses L-glutamyl-tRNA(Gln) + L-glutamine + ATP + H2O = L-glutaminyl-tRNA(Gln) + L-glutamate + ADP + phosphate + H(+). The catalysed reaction is L-aspartyl-tRNA(Asn) + L-glutamine + ATP + H2O = L-asparaginyl-tRNA(Asn) + L-glutamate + ADP + phosphate + 2 H(+). In terms of biological role, allows the formation of correctly charged Asn-tRNA(Asn) or Gln-tRNA(Gln) through the transamidation of misacylated Asp-tRNA(Asn) or Glu-tRNA(Gln) in organisms which lack either or both of asparaginyl-tRNA or glutaminyl-tRNA synthetases. The reaction takes place in the presence of glutamine and ATP through an activated phospho-Asp-tRNA(Asn) or phospho-Glu-tRNA(Gln). This Coprothermobacter proteolyticus (strain ATCC 35245 / DSM 5265 / OCM 4 / BT) protein is Aspartyl/glutamyl-tRNA(Asn/Gln) amidotransferase subunit B.